Reading from the N-terminus, the 120-residue chain is Large ribosomal subunit protein bL20 (120 aa).

It belongs to the bacterial ribosomal protein bL20 family.

Functionally, binds directly to 23S ribosomal RNA and is necessary for the in vitro assembly process of the 50S ribosomal subunit. It is not involved in the protein synthesizing functions of that subunit. This Karelsulcia muelleri (strain GWSS) (Sulcia muelleri) protein is Large ribosomal subunit protein bL20.